Here is a 255-residue protein sequence, read N- to C-terminus: MSDTRISIRYASEDLRERAEALAAELNLPLAGESAGTPLVLILDGHGLSLALTAPDAPGPIQVDFVTGRLGYRQARISLRSEPLARAVGIKDSERPSVVDATAGLGRDGFVLASLGCEVTLLEREPVIAALLADGLERAARDADLAQTIARMHLVTGNARDWLTALDEAPRPDVIYLDPMYPHRDKSALVKKEMRVFRTLVGDDQDAPETLEAALAVAKRRVVVKRPARAEPLSGRKPSHQIPGKTTRFDVYVTG.

S-adenosyl-L-methionine is bound by residues 107 to 108 (RD), 123 to 124 (ER), and aspartate 178. The disordered stretch occupies residues 228 to 247 (ARAEPLSGRKPSHQIPGKTT).

The protein belongs to the methyltransferase superfamily. RsmJ family.

The protein resides in the cytoplasm. The catalysed reaction is guanosine(1516) in 16S rRNA + S-adenosyl-L-methionine = N(2)-methylguanosine(1516) in 16S rRNA + S-adenosyl-L-homocysteine + H(+). Specifically methylates the guanosine in position 1516 of 16S rRNA. The chain is Ribosomal RNA small subunit methyltransferase J from Thioalkalivibrio sulfidiphilus (strain HL-EbGR7).